A 120-amino-acid polypeptide reads, in one-letter code: Phosphoribosyl-ATP pyrophosphatase (120 aa).

The protein belongs to the PRA-PH family.

Its subcellular location is the cytoplasm. It carries out the reaction 1-(5-phospho-beta-D-ribosyl)-ATP + H2O = 1-(5-phospho-beta-D-ribosyl)-5'-AMP + diphosphate + H(+). It functions in the pathway amino-acid biosynthesis; L-histidine biosynthesis; L-histidine from 5-phospho-alpha-D-ribose 1-diphosphate: step 2/9. The sequence is that of Phosphoribosyl-ATP pyrophosphatase from Methylibium petroleiphilum (strain ATCC BAA-1232 / LMG 22953 / PM1).